The following is a 1858-amino-acid chain: Inactive histone-lysine N-methyltransferase 2E (1858 aa).

The short motif at 63–66 is the HCFC1-binding motif (HBM) element; sequence DHNY. The PHD-type zinc finger occupies 118–166; sequence VTRCICGFTHDDGYMICCDKCSVWQHIDCMGIDRQHIPDTYLCERCQPR. Residues Cys-121, Cys-123, Cys-135, Cys-138, His-143, Cys-146, Cys-160, and Cys-163 each contribute to the Zn(2+) site. The disordered stretch occupies residues 217–269; it reads ASRVSKVNDKRRKKSGEKEQHISKCKKAFREGSRKSSRVKGSAPEIDPSSDGS. Residues 232 to 250 show a composition bias toward basic and acidic residues; that stretch reads GEKEQHISKCKKAFREGSR. The region spanning 330 to 447 is the SET domain; the sequence is PPVESHIQKN…KGTEITIAFD (118 aa). An O-linked (GlcNAc) serine glycan is attached at Ser-435. O-linked (GlcNAc) threonine glycosylation is present at Thr-440. Residues 475 to 530 are disordered; that stretch reads SESMENINSGYETRRKKGKKDKDISKEKDTQNQNITLDCEGTTNKMKSPETKQRKL. Positions 494–504 are enriched in basic and acidic residues; sequence KDKDISKEKDT. Residues 505–520 show a composition bias toward polar residues; that stretch reads QNQNITLDCEGTTNKM. Positions 559 to 615 form a coiled coil; it reads VEMESEEQIAERKRKMTREERKMEAILQAFARLEKREKRREQALERISTAKTEVKTE. Ser-623 carries the phosphoserine modification. Positions 630–687 are disordered; that stretch reads EQAKEENASKPTPAKVNRTKQRKSFSRSRTHIGQQRRRHRTVSMCSDIQPSSPDIEVT. Residues 646-670 show a composition bias toward basic residues; the sequence is NRTKQRKSFSRSRTHIGQQRRRHRT. A compositionally biased stretch (polar residues) spans 672–687; that stretch reads SMCSDIQPSSPDIEVT. A phosphoserine mark is found at Ser-837 and Ser-845. Composition is skewed to low complexity over residues 887 to 901 and 933 to 957; these read TSTP…PTHT and PVTP…PESS. Disordered regions lie at residues 887 to 960 and 1039 to 1068; these read TSTP…SPEI and LETP…SSWV. The span at 1039-1048 shows a compositional bias: basic and acidic residues; the sequence is LETPAHDRAE. Polar residues predominate over residues 1049-1068; it reads PNSQLDSTHSGRGTMYSSWV. The residue at position 1070 (Ser-1070) is a Phosphoserine. 2 disordered regions span residues 1164-1561 and 1581-1835; these read KRQR…QNQQ and VFTS…PVPG. Composition is skewed to polar residues over residues 1186 to 1206 and 1222 to 1235; these read PHAS…NDNG and TVYN…SNNC. At Ser-1273 the chain carries Phosphoserine. A compositionally biased stretch (basic and acidic residues) spans 1273 to 1282; sequence SDHRKDKDSG. Composition is skewed to low complexity over residues 1285 to 1303 and 1349 to 1362; these read SPCV…SSHS and KSPP…SPGS. A Phosphoserine modification is found at Ser-1359. Composition is skewed to polar residues over residues 1400 to 1432 and 1506 to 1542; these read QQKQ…SQKL and LPAN…LNST. The span at 1543–1553 shows a compositional bias: pro residues; that stretch reads APPPPPPPPPS. Over residues 1581–1599 the composition is skewed to polar residues; the sequence is VFTSGPNQALPGTTSQQTV. The span at 1626 to 1637 shows a compositional bias: pro residues; that stretch reads VPPPPPPPPAPG. The segment covering 1642–1651 has biased composition (polar residues); it reads QQPNSHQQHS. The span at 1677-1687 shows a compositional bias: pro residues; it reads LPPPPPPPGPA. The span at 1698 to 1711 shows a compositional bias: polar residues; it reads TGLQGLQAQHQHVV. Residues 1714–1724 show a composition bias toward pro residues; sequence APPPPPPPPPS. Over residues 1798-1808 the composition is skewed to polar residues; the sequence is QGPNSIPTPTA.

The protein belongs to the class V-like SAM-binding methyltransferase superfamily. Histone-lysine methyltransferase family. TRX/MLL subfamily. As to quaternary structure, component of a complex composed of KMT2E (isoform 3), OGT and USP7; the complex stabilizes KMT2E, preventing KMT2E ubiquitination and proteasomal-mediated degradation. Isoform 3 interacts (via N-terminus) with OGT (via TRP repeats). Isoform 3 interacts with deubiquitinating enzyme USP7 (via MATH domain). Isoform 3 interacts (via HBM motif) with HCFC1 (via Kelch domain). Isoform 3 interacts with E2F1; the interaction is probably indirect and is mediated via HCFC1. Post-translationally, ubiquitinated. Deubiquitinated by USP7. O-glycosylated at Ser-435 and Thr-440 in the SET domain by OGT which probably prevents KMT2E proteasomal-mediated degradation. As to expression, widely expressed in both adult and fetal tissues. Highest levels of expression observed in fetal thymus and kidney and in adult hematopoietic tissues, jejunum and cerebellum. Isoform NKp44L: Not detected on circulating cells from healthy individuals, but is expressed on a large panel of tumor and transformed cells.

The protein resides in the chromosome. It localises to the cytoplasm. Its subcellular location is the cytoskeleton. The protein localises to the microtubule organizing center. It is found in the centrosome. The protein resides in the nucleus speckle. It localises to the nucleus. Its subcellular location is the nucleoplasm. The protein localises to the cell membrane. Its function is as follows. Associates with chromatin regions downstream of transcriptional start sites of active genes and thus regulates gene transcription. Chromatin interaction is mediated via the binding to tri-methylated histone H3 at 'Lys-4' (H3K4me3). Key regulator of hematopoiesis involved in terminal myeloid differentiation and in the regulation of hematopoietic stem cell (HSCs) self-renewal by a mechanism that involves DNA methylation. Also acts as an important cell cycle regulator, participating in cell cycle regulatory network machinery at multiple cell cycle stages including G1/S transition, S phase progression and mitotic entry. Recruited to E2F1 responsive promoters by HCFC1 where it stimulates tri-methylation of histone H3 at 'Lys-4' and transcriptional activation and thereby facilitates G1 to S phase transition. During myoblast differentiation, required to suppress inappropriate expression of S-phase-promoting genes and maintain expression of determination genes in quiescent cells. Functionally, cellular ligand for NCR2/NKp44, may play a role as a danger signal in cytotoxicity and NK-cell-mediated innate immunity. This is Inactive histone-lysine N-methyltransferase 2E (KMT2E) from Homo sapiens (Human).